A 752-amino-acid chain; its full sequence is Xanthine dehydrogenase molybdenum-binding subunit (752 aa).

Mo-molybdopterin contacts are provided by glutamine 206, phenylalanine 237, arginine 350, and alanine 516.

Belongs to the xanthine dehydrogenase family. In terms of assembly, heterotrimer of XdhA, XdhB and XdhC. Mo-molybdopterin serves as cofactor.

The enzyme catalyses xanthine + NAD(+) + H2O = urate + NADH + H(+). The catalysed reaction is hypoxanthine + NAD(+) + H2O = xanthine + NADH + H(+). It functions in the pathway purine metabolism; hypoxanthine degradation; urate from hypoxanthine: step 1/2. Its pathway is purine metabolism; hypoxanthine degradation; urate from hypoxanthine: step 2/2. Functionally, presumed to be a dehydrogenase, but possibly an oxidase. Participates in limited purine salvage (requires aspartate) but does not support aerobic growth on purines as the sole carbon source (purine catabolism). The polypeptide is Xanthine dehydrogenase molybdenum-binding subunit (xdhA) (Escherichia coli O157:H7).